Here is a 47-residue protein sequence, read N- to C-terminus: ATP-dependent zinc metalloprotease FTSH, chloroplastic (47 aa).

This sequence in the N-terminal section; belongs to the AAA ATPase family. The protein in the C-terminal section; belongs to the peptidase M41 family. It depends on Zn(2+) as a cofactor.

The protein localises to the plastid. Its subcellular location is the chloroplast membrane. Seems to act as an ATP-dependent zinc metallopeptidase. In Populus euphratica (Euphrates poplar), this protein is ATP-dependent zinc metalloprotease FTSH, chloroplastic.